We begin with the raw amino-acid sequence, 361 residues long: 3-dehydroquinate synthase (361 aa).

NAD(+) is bound by residues 69–74 (DGEEYK), 103–107 (GVIGD), 127–128 (TT), K140, K149, and 167–170 (TLDT). Zn(2+)-binding residues include E182, H245, and H262.

The protein belongs to the sugar phosphate cyclases superfamily. Dehydroquinate synthase family. Co(2+) is required as a cofactor. The cofactor is Zn(2+). It depends on NAD(+) as a cofactor.

Its subcellular location is the cytoplasm. It catalyses the reaction 7-phospho-2-dehydro-3-deoxy-D-arabino-heptonate = 3-dehydroquinate + phosphate. Its pathway is metabolic intermediate biosynthesis; chorismate biosynthesis; chorismate from D-erythrose 4-phosphate and phosphoenolpyruvate: step 2/7. In terms of biological role, catalyzes the conversion of 3-deoxy-D-arabino-heptulosonate 7-phosphate (DAHP) to dehydroquinate (DHQ). In Thioalkalivibrio sulfidiphilus (strain HL-EbGR7), this protein is 3-dehydroquinate synthase.